The primary structure comprises 511 residues: Immunoglobulin-binding protein EibD (511 aa).

A signal peptide spans 1-26 (MSKKFTMTLLSSSLAGLLVMSGGVSA). Residues 27–417 (QNGTYSVLQD…SKAIAANTRT (391 aa)) form a surface exposed passenger domain region. Residues 27–460 (QNGTYSVLQD…GLFQPYSVGK (434 aa)) lie on the Extracellular side of the membrane. A head domain region spans residues 161–287 (DAKASGEFSV…TGTESDKTYG (127 aa)). The neck stretch occupies residues 288-303 (TRVLGGLSDGTRNSDA). A right-handed coiled-coil (RHcc) region spans residues 304–349 (ATVGQLNRKVGGVYDDVKARITVESEKQKKYTDQKTSEVNEKVEAR). A coiled-coil region spans residues 304–349 (ATVGQLNRKVGGVYDDVKARITVESEKQKKYTDQKTSEVNEKVEAR). The interval 329–344 (EKQKKYTDQKTSEVNE) is required to bind IgA. The interval 350-375 (TTVGVDSDGKLTRAEGATKTIAVNDG) is saddle domain. A coiled-coil region spans residues 376–441 (LVALSGRTDR…INENHKEMKR (66 aa)). The interval 376–441 (LVALSGRTDR…INENHKEMKR (66 aa)) is left-handed coiled-coil (LHcc). Positions 384–418 (DRIDYAVGAIDGRVTRNTQSIEKNSKAIAANTRTL) are required to bind IgG. Positions 418–460 (LQQHSARLDSQQRQINENHKEMKRAAAQSAALTGLFQPYSVGK) are outer membrane translocation of the passenger domain. A run of 4 beta stranded transmembrane segments spans residues 461–471 (FNATAAVGGYS), 474–485 (QALAVGVGYRFN), 488–497 (TAAKAGVAFS), and 501–511 (ASWNVGVNFEF). The tract at residues 461 to 511 (FNATAAVGGYSDQQALAVGVGYRFNEQTAAKAGVAFSDGDASWNVGVNFEF) is translocator domain.

It belongs to the autotransporter-2 (AT-2) (TC 1.B.40) family. Eib subfamily. Homotrimer; can probably form mixed heterotrimers in vivo. Will form mixed heterotrimers with EibA or EibC; these are correctly located in the outer membrane and bind IgG Fc, although less well than homotrimers. In denaturing gels runs as a band of about 210 kDa. Binds the Fc portion of immunoglobulins; binds more than 1 Fc per subunit, can be modeled to bind 3 Fc per trimer.

The protein resides in the cell surface. The protein localises to the cell outer membrane. Functionally, binds (in a non-immune fashion) to the Fc portion of human IgA and IgG; binding occurs on the cell surface. Confers the ability to survive exposure to human serum exposure. Binds to the Fc portion of human IgG, IgA and to whole mouse antibodies also via Fc. Upon overexpression cells acquire an extra cell surface layer that forms a zipper-like contact between cells; cells autoagglutinate and form biofilm more readily, suggesting it may play a role in defense against a host. In Escherichia coli, this protein is Immunoglobulin-binding protein EibD.